The following is a 311-amino-acid chain: Ribosomal RNA small subunit methyltransferase H (311 aa).

Residues 39-41 (GGH), aspartate 59, phenylalanine 81, aspartate 102, and histidine 109 each bind S-adenosyl-L-methionine.

The protein belongs to the methyltransferase superfamily. RsmH family.

Its subcellular location is the cytoplasm. It catalyses the reaction cytidine(1402) in 16S rRNA + S-adenosyl-L-methionine = N(4)-methylcytidine(1402) in 16S rRNA + S-adenosyl-L-homocysteine + H(+). Specifically methylates the N4 position of cytidine in position 1402 (C1402) of 16S rRNA. The sequence is that of Ribosomal RNA small subunit methyltransferase H from Porphyromonas gingivalis (strain ATCC BAA-308 / W83).